Reading from the N-terminus, the 344-residue chain is Mitochondrial substrate carrier family protein D (344 aa).

The Mitochondrial intermembrane portion of the chain corresponds to 1-22 (MDSTKTNNKWAAAGILNSVGKD). Solcar repeat units lie at residues 17-104 (NSVG…CQSY), 119-212 (IPYH…MKRK), and 239-327 (VPAW…TRNL). Residues 23–43 (FVAGSVGGMSSIMAGHPFDTI) form a helical membrane-spanning segment. Residues 44-75 (KVMLQDASGNLPKFKNGFQALKYIMKVDGIKG) are Mitochondrial matrix-facing. Residues 76–96 (IYRGLSVPLFSVSFTNSVFFA) traverse the membrane as a helical segment. The Mitochondrial intermembrane portion of the chain corresponds to 97–116 (TNNFCQSYFHPPCKDENGED). Residues 117–137 (ILIPYHKAAAAGAIAGGVISL) form a helical membrane-spanning segment. Topologically, residues 138–186 (LITPRDLVKSKLQVQCRPFGSTNVSLQYKGPIDVIRQTIKRDGIKGMFK) are mitochondrial matrix. The helical transmembrane segment at 187–207 (GIRSTFCRDIPGDAVYFVVYE) threads the bilayer. At 208 to 238 (FMKRKLLALSKNNNNNNNNNDNNDNSSPKAG) the chain is on the mitochondrial intermembrane side. Residues 239-259 (VPAWVAIGAGGCAGMSFWMSI) form a helical membrane-spanning segment. The Mitochondrial matrix portion of the chain corresponds to 260-301 (YPMDVVKTRIQTQPDHLPPQYTSVLQTITKIYREEGISVFFR). A helical membrane pass occupies residues 302-321 (GFSATILRAFPTSAVNFLMY). The Mitochondrial intermembrane segment spans residues 322-344 (ETTRNLLNSKDPFYNNNDHYNAE).

The protein belongs to the mitochondrial carrier (TC 2.A.29) family.

It is found in the mitochondrion inner membrane. Calcium-dependent mitochondrial solute carrier. Mitochondrial solute carriers shuttle metabolites, nucleotides, and cofactors through the mitochondrial inner membrane. The chain is Mitochondrial substrate carrier family protein D (mcfD) from Dictyostelium discoideum (Social amoeba).